Reading from the N-terminus, the 699-residue chain is Fervidolysin (699 aa).

Positions 1–21 (MRKVLLIASIVALILALFSCA) are cleaved as a signal peptide. A propeptide spanning residues 22–149 (NPSFEPRSKA…MYKIRKPGLN (128 aa)) is cleaved from the precursor. Residue E157 participates in Ca(2+) binding. Positions 163–465 (LWGLEAIGVT…YGLVKLDAAL (303 aa)) constitute a Peptidase S8 domain. The Charge relay system role is filled by D190. D199 serves as a coordination point for Ca(2+). Residue H228 is the Charge relay system of the active site. Ca(2+) contacts are provided by K239, D241, K243, and I245. The active-site Charge relay system is the S409.

It belongs to the peptidase S8 family. Undergoes auto-proteolytic processing. Once cleaved, the propeptide can remain associated with the protease and blocks its activity. The physiological activation of fervidolysin is proposed to be achieved through the stepwise removal of the propeptide accomplished by several proteolytic cleavages that may not be autolytic.

Its subcellular location is the cell surface. With respect to regulation, is inhibited by phenylmethylsulfonyl fluoride and 3,4-dichloroisocoumarin. EDTA and iodoacetate (1 to 5 mM) have only little effect on the enzyme activity. Its function is as follows. Protease able to degrade keratin into peptides. Is responsible for keratinolysis by F.pennivorans, which allows this bacterium to grow on native feathers. This Fervidobacterium pennivorans protein is Fervidolysin.